The primary structure comprises 296 residues: Stanniocalcin-2 (296 aa).

Positions 1–24 are cleaved as a signal peptide; that stretch reads MCAERLGQFVTLALVFATLDPAQG. The disordered stretch occupies residues 21–44; the sequence is PAQGTDSTNPPEGPQDRSSQQKGR. Residues 24-44 show a composition bias toward polar residues; sequence GTDSTNPPEGPQDRSSQQKGR. Asn73 is a glycosylation site (N-linked (GlcNAc...) asparagine). Residues 218-296 are disordered; that stretch reads PPTAAPEHQP…EQSEYSDIRR (79 aa). A compositionally biased stretch (basic and acidic residues) spans 240–258; the sequence is RDTDHHLTANRGAKGERGS. Residues 272–282 are compositionally biased toward low complexity; it reads GQSAQGPSGSS.

Belongs to the stanniocalcin family. Homodimer; disulfide-linked. As to expression, found in a variety of tissues including skeletal muscle, small intestine, kidney, liver and brain.

The protein resides in the secreted. Functionally, has an anti-hypocalcemic action on calcium and phosphate homeostasis. The protein is Stanniocalcin-2 (Stc2) of Mus musculus (Mouse).